The chain runs to 423 residues: Glucose-1-phosphate adenylyltransferase (423 aa).

Alpha-D-glucose 1-phosphate contacts are provided by residues Tyr-108, Gly-173, 188 to 189 (EK), and Ser-207.

This sequence belongs to the bacterial/plant glucose-1-phosphate adenylyltransferase family. In terms of assembly, homotetramer.

The enzyme catalyses alpha-D-glucose 1-phosphate + ATP + H(+) = ADP-alpha-D-glucose + diphosphate. It participates in glycan biosynthesis; glycogen biosynthesis. In terms of biological role, involved in the biosynthesis of ADP-glucose, a building block required for the elongation reactions to produce glycogen. Catalyzes the reaction between ATP and alpha-D-glucose 1-phosphate (G1P) to produce pyrophosphate and ADP-Glc. The protein is Glucose-1-phosphate adenylyltransferase of Francisella tularensis subsp. novicida (strain U112).